We begin with the raw amino-acid sequence, 258 residues long: Acyl-[acyl-carrier-protein]--UDP-N-acetylglucosamine O-acyltransferase (258 aa).

It belongs to the transferase hexapeptide repeat family. LpxA subfamily. Homotrimer.

It is found in the cytoplasm. The enzyme catalyses a (3R)-hydroxyacyl-[ACP] + UDP-N-acetyl-alpha-D-glucosamine = a UDP-3-O-[(3R)-3-hydroxyacyl]-N-acetyl-alpha-D-glucosamine + holo-[ACP]. Its pathway is glycolipid biosynthesis; lipid IV(A) biosynthesis; lipid IV(A) from (3R)-3-hydroxytetradecanoyl-[acyl-carrier-protein] and UDP-N-acetyl-alpha-D-glucosamine: step 1/6. Functionally, involved in the biosynthesis of lipid A, a phosphorylated glycolipid that anchors the lipopolysaccharide to the outer membrane of the cell. The chain is Acyl-[acyl-carrier-protein]--UDP-N-acetylglucosamine O-acyltransferase from Pseudomonas fluorescens (strain SBW25).